A 1325-amino-acid polypeptide reads, in one-letter code: Cellulose synthase 1 operon protein C (1325 aa).

The N-terminal stretch at 1–30 (MNRRYVFSLSAGLLASSCMGAIMPVPVARA) is a signal peptide. 8 TPR repeats span residues 50–83 (RQIL…APDA), 85–117 (DVLE…APGS), 292–325 (AGLA…NSHD), 326–359 (ADSL…DPKT), 406–439 (TGAT…DPNN), 558–591 (NDAA…KEDL), 702–735 (MGIA…DPEA), and 737–769 (SPKL…NPQD). A disordered region spans residues 838 to 886 (VEGSRSASGPAATEEDALAPPSSNPFRHHGYGRQTELGAPVTGGSYSME).

This sequence belongs to the AcsC/BcsC family.

The protein resides in the cell outer membrane. It participates in glycan metabolism; bacterial cellulose biosynthesis. Functionally, required for maximal bacterial cellulose synthesis. It may be involved in the formation of a membrane complex for extrusion of the cellulose product. The sequence is that of Cellulose synthase 1 operon protein C (bcsCI) from Komagataeibacter xylinus (Gluconacetobacter xylinus).